Consider the following 407-residue polypeptide: uncharacterized protein (407 aa).

A run of 12 helical transmembrane segments spans residues 22–42 (IVSV…PLAV), 51–71 (LGFS…ATLA), 101–121 (ALLL…GLLV), 126–146 (VLGI…IGRV), 154–174 (VISW…PVGV), 179–199 (ALIP…GYYL), 227–247 (GLGL…ITLY), 258–278 (LSLT…ANTI), 286–306 (VAIV…LAPV), 309–329 (VALV…PALG), 347–367 (AYSV…GYVA), and 369–389 (AFGY…GVAL).

The protein belongs to the major facilitator superfamily. YhhS family.

The protein resides in the cell inner membrane. This is an uncharacterized protein from Burkholderia mallei (strain NCTC 10229).